A 545-amino-acid polypeptide reads, in one-letter code: Methionine--tRNA ligase (545 aa).

The 'HIGH' region motif lies at 15-25; it reads PYANGPIHLGH. Zn(2+) is bound by residues C146, C149, C159, and C162. The 'KMSKS' region motif lies at 332-336; sequence KMSKS. K335 serves as a coordination point for ATP.

The protein belongs to the class-I aminoacyl-tRNA synthetase family. MetG type 1 subfamily. In terms of assembly, monomer. It depends on Zn(2+) as a cofactor.

It localises to the cytoplasm. It carries out the reaction tRNA(Met) + L-methionine + ATP = L-methionyl-tRNA(Met) + AMP + diphosphate. In terms of biological role, is required not only for elongation of protein synthesis but also for the initiation of all mRNA translation through initiator tRNA(fMet) aminoacylation. This is Methionine--tRNA ligase from Hamiltonella defensa subsp. Acyrthosiphon pisum (strain 5AT).